A 595-amino-acid polypeptide reads, in one-letter code: Arginine--tRNA ligase (595 aa).

The 'HIGH' region signature appears at 132–142; it reads ANPTGPLHVGH.

It belongs to the class-I aminoacyl-tRNA synthetase family. Monomer.

It is found in the cytoplasm. The enzyme catalyses tRNA(Arg) + L-arginine + ATP = L-arginyl-tRNA(Arg) + AMP + diphosphate. This chain is Arginine--tRNA ligase, found in Cupriavidus taiwanensis (strain DSM 17343 / BCRC 17206 / CCUG 44338 / CIP 107171 / LMG 19424 / R1) (Ralstonia taiwanensis (strain LMG 19424)).